The primary structure comprises 698 residues: Long-chain-fatty-acid--CoA ligase 1 (698 aa).

Met1 is subject to N-acetylmethionine. Tyr9 is modified (3'-nitrotyrosine). Phosphotyrosine is present on Tyr84. Ser135 carries O-linked (GlcNAc) serine glycosylation. 2 positions are modified to N6-acetyllysine: Lys356 and Lys386. Ser620 bears the Phosphoserine mark. The residue at position 632 (Lys632) is an N6-acetyllysine.

It belongs to the ATP-dependent AMP-binding enzyme family. It depends on Mg(2+) as a cofactor.

It is found in the microsome membrane. The protein resides in the mitochondrion outer membrane. Its subcellular location is the peroxisome membrane. The protein localises to the endoplasmic reticulum membrane. It catalyses the reaction a long-chain fatty acid + ATP + CoA = a long-chain fatty acyl-CoA + AMP + diphosphate. The catalysed reaction is (5Z,8Z,11Z,14Z)-eicosatetraenoate + ATP + CoA = (5Z,8Z,11Z,14Z)-eicosatetraenoyl-CoA + AMP + diphosphate. The enzyme catalyses 3,7,11,15-tetramethylhexadecanoate + ATP + CoA = phytanoyl-CoA + AMP + diphosphate. It carries out the reaction hexadecanoate + ATP + CoA = hexadecanoyl-CoA + AMP + diphosphate. It catalyses the reaction (E)-hexadec-2-enoate + ATP + CoA = (2E)-hexadecenoyl-CoA + AMP + diphosphate. The catalysed reaction is 2,6,10,14-tetramethylpentadecanoate + ATP + CoA = pristanoyl-CoA + AMP + diphosphate. The enzyme catalyses 14,15-epoxy-(5Z,8Z,11Z)-eicosatrienoate + ATP + CoA = 14,15-epoxy-(5Z,8Z,11Z)-eicosatrienoyl-CoA + AMP + diphosphate. It carries out the reaction 5-hydroxy-(6E,8Z,11Z,14Z)-eicosatetraenoate + ATP + CoA = 5-hydroxy-(6E,8Z,11Z,14Z)-eicosatetraenoyl-CoA + AMP + diphosphate. It catalyses the reaction 12-hydroxy-(5Z,8Z,10E,14Z)-eicosatetraenoate + ATP + CoA = 12-hydroxy-(5Z,8Z,10E,14Z)-eicosatetraenoyl-CoA + AMP + diphosphate. The catalysed reaction is 15-hydroxy-(5Z,8Z,11Z,13E)-eicosatetraenoate + ATP + CoA = 15-hydroxy-(5Z,8Z,11Z,13E)-eicosatetraenoyl-CoA + AMP + diphosphate. The enzyme catalyses (9Z)-octadecenoate + ATP + CoA = (9Z)-octadecenoyl-CoA + AMP + diphosphate. With respect to regulation, inhibited at high temperature and by arachidonate. Functionally, catalyzes the conversion of long-chain fatty acids to their active form acyl-CoAs for both synthesis of cellular lipids, and degradation via beta-oxidation. Preferentially uses palmitoleate, oleate and linoleate. Preferentially activates arachidonate than epoxyeicosatrienoic acids (EETs) or hydroxyeicosatrienoic acids (HETEs). The chain is Long-chain-fatty-acid--CoA ligase 1 from Cavia porcellus (Guinea pig).